A 378-amino-acid polypeptide reads, in one-letter code: Erythronate-4-phosphate dehydrogenase (378 aa).

Residues Ser-45 and Thr-66 each coordinate substrate. Residues Asp-146 and Thr-175 each coordinate NAD(+). Arg-208 is a catalytic residue. NAD(+) is bound at residue Asp-232. The active site involves Glu-237. The Proton donor role is filled by His-254. Gly-257 lines the NAD(+) pocket. Residue Tyr-258 participates in substrate binding.

This sequence belongs to the D-isomer specific 2-hydroxyacid dehydrogenase family. PdxB subfamily. Homodimer.

The protein resides in the cytoplasm. It catalyses the reaction 4-phospho-D-erythronate + NAD(+) = (R)-3-hydroxy-2-oxo-4-phosphooxybutanoate + NADH + H(+). It functions in the pathway cofactor biosynthesis; pyridoxine 5'-phosphate biosynthesis; pyridoxine 5'-phosphate from D-erythrose 4-phosphate: step 2/5. Catalyzes the oxidation of erythronate-4-phosphate to 3-hydroxy-2-oxo-4-phosphonooxybutanoate. This chain is Erythronate-4-phosphate dehydrogenase, found in Pectobacterium atrosepticum (strain SCRI 1043 / ATCC BAA-672) (Erwinia carotovora subsp. atroseptica).